Consider the following 325-residue polypeptide: Ribose-phosphate pyrophosphokinase (325 aa).

ATP-binding positions include 45–47 (NGE) and 104–105 (RQ). The Mg(2+) site is built by His-138 and Asp-178. Lys-202 is a catalytic residue. D-ribose 5-phosphate contacts are provided by residues Arg-204, Asp-230, and 234–238 (DTGGT).

This sequence belongs to the ribose-phosphate pyrophosphokinase family. Class I subfamily. In terms of assembly, homohexamer. Mg(2+) serves as cofactor.

The protein resides in the cytoplasm. It catalyses the reaction D-ribose 5-phosphate + ATP = 5-phospho-alpha-D-ribose 1-diphosphate + AMP + H(+). Its pathway is metabolic intermediate biosynthesis; 5-phospho-alpha-D-ribose 1-diphosphate biosynthesis; 5-phospho-alpha-D-ribose 1-diphosphate from D-ribose 5-phosphate (route I): step 1/1. In terms of biological role, involved in the biosynthesis of the central metabolite phospho-alpha-D-ribosyl-1-pyrophosphate (PRPP) via the transfer of pyrophosphoryl group from ATP to 1-hydroxyl of ribose-5-phosphate (Rib-5-P). The sequence is that of Ribose-phosphate pyrophosphokinase from Corynebacterium efficiens (strain DSM 44549 / YS-314 / AJ 12310 / JCM 11189 / NBRC 100395).